Reading from the N-terminus, the 442-residue chain is tRNA-2-methylthio-N(6)-dimethylallyladenosine synthase (442 aa).

The 118-residue stretch at 3–120 (KKLYIETHGC…LPEMIDAARV (118 aa)) folds into the MTTase N-terminal domain. [4Fe-4S] cluster is bound by residues C12, C49, C83, C157, C161, and C164. Residues 143–375 (RVDGPSAYVS…QHRLNQQGFE (233 aa)) form the Radical SAM core domain. Residues 378-442 (RQMVGSIQRI…PHSLRGSLLQ (65 aa)) enclose the TRAM domain.

This sequence belongs to the methylthiotransferase family. MiaB subfamily. Monomer. [4Fe-4S] cluster serves as cofactor.

It localises to the cytoplasm. It catalyses the reaction N(6)-dimethylallyladenosine(37) in tRNA + (sulfur carrier)-SH + AH2 + 2 S-adenosyl-L-methionine = 2-methylsulfanyl-N(6)-dimethylallyladenosine(37) in tRNA + (sulfur carrier)-H + 5'-deoxyadenosine + L-methionine + A + S-adenosyl-L-homocysteine + 2 H(+). Functionally, catalyzes the methylthiolation of N6-(dimethylallyl)adenosine (i(6)A), leading to the formation of 2-methylthio-N6-(dimethylallyl)adenosine (ms(2)i(6)A) at position 37 in tRNAs that read codons beginning with uridine. This chain is tRNA-2-methylthio-N(6)-dimethylallyladenosine synthase, found in Pseudomonas syringae pv. syringae (strain B728a).